The following is a 545-amino-acid chain: Thermosome subunit alpha (545 aa).

It belongs to the TCP-1 chaperonin family. As to quaternary structure, forms a Heterooligomeric complex of two stacked eight-membered rings.

Its function is as follows. Molecular chaperone; binds unfolded polypeptides in vitro, and has a weak ATPase activity. This Archaeoglobus fulgidus (strain ATCC 49558 / DSM 4304 / JCM 9628 / NBRC 100126 / VC-16) protein is Thermosome subunit alpha (thsA).